The chain runs to 727 residues: Catalase-peroxidase (727 aa).

A disordered region spans residues 1 to 24 (MDQKSDSAGKCPVAHTAPRGRSNR). The tryptophyl-tyrosyl-methioninium (Trp-Tyr) (with M-243) cross-link spans 95-217 (WHSAGTYRIT…LAAVQMGLIY (123 aa)). Catalysis depends on His-96, which acts as the Proton acceptor. The segment at residues 217–243 (YVNPEGPNGNPDPVAAARDIRETFARM) is a cross-link (tryptophyl-tyrosyl-methioninium (Tyr-Met) (with W-95)). A heme b-binding site is contributed by His-258.

This sequence belongs to the peroxidase family. Peroxidase/catalase subfamily. Homodimer or homotetramer. Requires heme b as cofactor. Post-translationally, formation of the three residue Trp-Tyr-Met cross-link is important for the catalase, but not the peroxidase activity of the enzyme.

The enzyme catalyses H2O2 + AH2 = A + 2 H2O. It catalyses the reaction 2 H2O2 = O2 + 2 H2O. Functionally, bifunctional enzyme with both catalase and broad-spectrum peroxidase activity. The polypeptide is Catalase-peroxidase (Rhizobium meliloti (strain 1021) (Ensifer meliloti)).